The primary structure comprises 348 residues: MGPRARPALFFLILLRTVAAQGRPPRSHSLRYLFMGASERDHGLPLFEALGYVDDELFVAYNHESRRAESRAQWVLGEAHSQLWLQLSQSLKGWDHMFIVDFWTIMDNHNHSKESHTLQVILGCEVQEDNSTRGFWKYGYDGQDHLEFCPETLDWRAAESRALTTKLEWEVNKIRAKQNRAYLERDCPEQLQWLLELGRGVLDQQVPPLVKVTHHVASAVTTLRCQALNFYPQNITMRWLKDRKPVDVKDAESKDVLPSGDGTYQSWVALAVPPGEEQRYTCQVEHPGLDQPLTATWEPSLSNTLVTGVISGIAVCVIIFLIGILFRILRKRQASRGAMGDYVLAECE.

An N-terminal signal peptide occupies residues 1–22 (MGPRARPALFFLILLRTVAAQG). Positions 23 to 114 (RPPRSHSLRY…IMDNHNHSKE (92 aa)) are alpha-1. At 23-306 (RPPRSHSLRY…WEPSLSNTLV (284 aa)) the chain is on the extracellular side. N-linked (GlcNAc...) asparagine glycosylation is found at Asn110, Asn130, and Asn234. Positions 115 to 205 (SHTLQVILGC…ELGRGVLDQQ (91 aa)) are alpha-2. Disulfide bonds link Cys124-Cys187 and Cys225-Cys282. The interval 206-297 (VPPLVKVTHH…GLDQPLTATW (92 aa)) is alpha-3. The region spanning 207–296 (PPLVKVTHHV…PGLDQPLTAT (90 aa)) is the Ig-like C1-type domain. Positions 298-306 (EPSLSNTLV) are connecting peptide. A helical membrane pass occupies residues 307-330 (TGVISGIAVCVIIFLIGILFRILR). At 331–348 (KRQASRGAMGDYVLAECE) the chain is on the cytoplasmic side.

Belongs to the MHC class I family. In terms of assembly, binds TFR through the extracellular domain in a pH-dependent manner.

Its subcellular location is the cell membrane. In terms of biological role, binds to transferrin receptor (TFR) and reduces its affinity for iron-loaded transferrin. In Dicerorhinus sumatrensis (Sumatran rhinoceros), this protein is Hereditary hemochromatosis protein homolog (HFE).